A 326-amino-acid polypeptide reads, in one-letter code: Flap endonuclease 1 (326 aa).

An N-domain region spans residues 1-98 (MGVQFNDSIP…KTREERRKVK (98 aa)). Mg(2+) contacts are provided by aspartate 27, aspartate 80, glutamate 152, glutamate 154, aspartate 173, aspartate 175, and aspartate 224. The tract at residues 116-245 (DMQKYAKRIN…KKALTIIKNK (130 aa)) is I-domain. The tract at residues 318–326 (SQTSLDSWF) is interaction with PCNA.

It belongs to the XPG/RAD2 endonuclease family. FEN1 subfamily. As to quaternary structure, interacts with PCNA. PCNA stimulates the nuclease activity without altering cleavage specificity. It depends on Mg(2+) as a cofactor.

Its function is as follows. Structure-specific nuclease with 5'-flap endonuclease and 5'-3' exonuclease activities involved in DNA replication and repair. During DNA replication, cleaves the 5'-overhanging flap structure that is generated by displacement synthesis when DNA polymerase encounters the 5'-end of a downstream Okazaki fragment. Binds the unpaired 3'-DNA end and kinks the DNA to facilitate 5' cleavage specificity. Cleaves one nucleotide into the double-stranded DNA from the junction in flap DNA, leaving a nick for ligation. Also involved in the base excision repair (BER) pathway. Acts as a genome stabilization factor that prevents flaps from equilibrating into structures that lead to duplications and deletions. Also possesses 5'-3' exonuclease activity on nicked or gapped double-stranded DNA. This chain is Flap endonuclease 1, found in Methanococcus aeolicus (strain ATCC BAA-1280 / DSM 17508 / OCM 812 / Nankai-3).